The following is a 274-amino-acid chain: Purine nucleoside phosphorylase 1 (274 aa).

Residues Ser-29, His-60, 80-82 (RFH), and Ala-112 contribute to the phosphate site. At Ser-29 the chain carries Phosphoserine. Glu-192 provides a ligand contact to a purine D-ribonucleoside. Ser-211 is a binding site for phosphate. Position 234 (Asn-234) interacts with a purine D-ribonucleoside.

This sequence belongs to the PNP/MTAP phosphorylase family. Homotrimer.

It carries out the reaction a purine D-ribonucleoside + phosphate = a purine nucleobase + alpha-D-ribose 1-phosphate. The enzyme catalyses a purine 2'-deoxy-D-ribonucleoside + phosphate = a purine nucleobase + 2-deoxy-alpha-D-ribose 1-phosphate. It functions in the pathway purine metabolism; purine nucleoside salvage. Its function is as follows. The purine nucleoside phosphorylases catalyze the phosphorolytic breakdown of the N-glycosidic bond in the beta-(deoxy)ribonucleoside molecules, with the formation of the corresponding free purine bases and pentose-1-phosphate. Cleaves guanosine, inosine, 2'-deoxyguanosine and 2'-deoxyinosine. This is Purine nucleoside phosphorylase 1 (punA) from Geobacillus stearothermophilus (Bacillus stearothermophilus).